The sequence spans 939 residues: Isoleucine--tRNA ligase (939 aa).

The short motif at Pro59–His69 is the 'HIGH' region element. Residue Glu570 coordinates L-isoleucyl-5'-AMP. The 'KMSKS' region signature appears at Lys611–Ser615. Lys614 provides a ligand contact to ATP. Residues Cys902, Cys905, Cys922, and Cys925 each contribute to the Zn(2+) site.

Belongs to the class-I aminoacyl-tRNA synthetase family. IleS type 1 subfamily. As to quaternary structure, monomer. Zn(2+) serves as cofactor.

It localises to the cytoplasm. It carries out the reaction tRNA(Ile) + L-isoleucine + ATP = L-isoleucyl-tRNA(Ile) + AMP + diphosphate. In terms of biological role, catalyzes the attachment of isoleucine to tRNA(Ile). As IleRS can inadvertently accommodate and process structurally similar amino acids such as valine, to avoid such errors it has two additional distinct tRNA(Ile)-dependent editing activities. One activity is designated as 'pretransfer' editing and involves the hydrolysis of activated Val-AMP. The other activity is designated 'posttransfer' editing and involves deacylation of mischarged Val-tRNA(Ile). This chain is Isoleucine--tRNA ligase, found in Nitrosomonas europaea (strain ATCC 19718 / CIP 103999 / KCTC 2705 / NBRC 14298).